The following is a 512-amino-acid chain: mRNA export factor (512 aa).

Over residues 1 to 15 the composition is skewed to low complexity; sequence MATDIDMLIDLGLDL. The disordered stretch occupies residues 1 to 243; the sequence is MATDIDMLID…APERKAPAAD (243 aa). The Nuclear export signal signature appears at 5–17; that stretch reads IDMLIDLGLDLSD. S16 and S18 each carry phosphoserine; by host. 2 stretches are compositionally biased toward acidic residues: residues 16–26 and 35–51; these read SDSDLDEDPPE and LESDSSGECSSSDEDME. Residues 104 to 112 form an interaction with host ALYREF region; sequence VWSRLGARR. The Nuclear localization signal motif lies at 110–138; the sequence is ARRPSCSPEQHGGKVARLQPPPTKAQPAR. S114 is modified (phosphoserine; by host). The residue at position 138 (R138) is a Dimethylated arginine; by host. An RGG-box region spans residues 138 to 152; it reads RGGRRGRRRGRGRGG. The span at 139–149 shows a compositional bias: basic residues; it reads GGRRGRRRGRG. R148 bears the Omega-N-methylarginine; by host mark. At R150 the chain carries Dimethylated arginine; by host. The span at 214–233 shows a compositional bias: pro residues; that stretch reads APPPLMTLAIAPPPADPRAP. Zn(2+) is bound by residues C400, H479, C483, and C488. A CHC2-type zinc finger spans residues 400–488; the sequence is CYLKARGLCG…HRQECSSRVC (89 aa). The segment at 500 to 512 is important for homodimerization; sequence YVHGKYFYCNSLF.

Belongs to the HHV-1 ICP27 protein family. As to quaternary structure, homodimer. Interacts with host RBP1; this interaction facilitates the RNA polymerase recruitment to viral transcription sites. Interacts (via the RGG box) with host ALYREF/THOC4; this interaction recruits ALYREF to viral replication compartments and probably directs viral mRNA to the TAP/NFX1 pathway. Interacts with host ALYREF2. Interacts (via the RGG box) with host SRPK1; this interaction relocalizes SRPK1 to the nucleus and seems to alter its activity. Interacts with ICP4; this interaction modulates ICP4 DNA-binding activity. Interacts with host NXF1; this interaction allows efficient export of HHV-1 early and late transcripts. Methylated within the RGG box possibly by host PRMT1. When hypomethylated, ICP27 is exported to the cytoplasm earlier and more rapidly. Post-translationally, phosphorylated.

It is found in the host cytoplasm. The protein localises to the host nucleus. In terms of biological role, multifunctional regulator of the expression of viral genes that contributes to the shutoff of host protein synthesis and mediates nuclear export of viral intronless mRNAs. Early in infection, this immediate early (EI) protein mediates the inhibition of cellular splicing. This results in the accumulation of unprocessed 3'end pre-mRNAs which can't be exported from the nucleus. Cellular protein synthesis is thereby shut off early after virus infection. Later in the infection, it helps recruit cellular RNA polymerase II to viral replication sites and promotes the nuclear export of viral intronless mRNAs by interacting with mRNAs and host NXF1/TAP. ICP27 binds to NUP62 which may provide facilitated viral mRNA export and may indirectly compete with some host cell transport receptors for binding and inhibit cellular nucleocytoplasmic transport pathways. Also stimulates translation of viral transcripts. Repression of host gene expression blocks the cell cycle at the G1 phase and prevents apoptosis. Seems to silence the 3' splice site of the promyelocytic leukemia (PML) intron 7a, thereby switching PML isoforms from PML-II to PML-V. This could be linked to the accelerated mRNA export induced by ICP27 which might not provide sufficient time for PML pre-mRNA to be spliced in the nucleus. The chain is mRNA export factor from Homo sapiens (Human).